A 123-amino-acid chain; its full sequence is WAP four-disulfide core domain protein 2 (123 aa).

A signal peptide spans 1-28 (MPASRLVPLGAVLLLGLLLLLELPPVTG). WAP domains are found at residues 30 to 71 (GADK…SAIC) and 74 to 122 (PNEK…VTPN). Disulfide bonds link C37-C63, C46-C67, C50-C62, C56-C71, C81-C109, C92-C113, C96-C108, and C102-C118. A glycan (N-linked (GlcNAc...) asparagine) is linked at N45.

As to quaternary structure, homotrimer; disulfide-linked. In terms of tissue distribution, epididymis.

It is found in the secreted. Its function is as follows. Broad range protease inhibitor. This Oryctolagus cuniculus (Rabbit) protein is WAP four-disulfide core domain protein 2 (WFDC2).